The primary structure comprises 389 residues: Protein WALLS ARE THIN 1 (389 aa).

The next 10 helical transmembrane spans lie at 18-38, 49-69, 76-96, 111-131, 143-163, 198-218, 230-250, 266-286, 294-314, and 319-339; these read LQLHIAMLTLQFGYAGFHVVS, LVFPVYRNIIALLLLLPFAYF, PAITLNFLIQFFFLALIGITA, TFASSMQNSVPAITFLMAALL, GISKILGTALCVAGASVITLY, WTLGCIYLIGHCLSWSGWLVF, LSVTSYTCFFGIIQFLIIAAF, LFTILYAGIVASGIAFAVQIW, VFVAVYQPVQTLVVAIMASIA, and FYLGGIIGAVLIIAGLYFVLY. 2 consecutive EamA domains span residues 32–161 and 210–339; these read AGFH…SVIT and LSWS…FVLY. Ser-372 is subject to Phosphoserine.

Belongs to the drug/metabolite transporter (DMT) superfamily. Plant drug/metabolite exporter (P-DME) (TC 2.A.7.4) family. Mostly expressed in stems and hypocotyls, also present in seedlings, root, leaves, flowers and siliques. Ubiquitous, mostly expressed in vascular tissues and secondary wall-forming cells, including developing xylem vessels and fibers.

Its subcellular location is the vacuole membrane. Functionally, required for secondary wall formation in fibers, especially in short days conditions. Promotes indole metabolism and transport (e.g. tryptophan, neoglucobrassicin and auxin (indole-3-acetic acid)). May prevent salicylic-acid (SA) accumulation. The protein is Protein WALLS ARE THIN 1 (WAT1) of Arabidopsis thaliana (Mouse-ear cress).